A 98-amino-acid chain; its full sequence is Keratin-associated protein 3-1 (98 aa).

An N-acetylalanine modification is found at Ala2. Repeat copies occupy residues 3–7, 8–12, 47–51, and 55–59. The tract at residues 3–59 is 4 X 5 AA repeats of C-C-X(3); that stretch reads CCAPRCCSVRTGPATTICSSDQFCRCGVCLPSTCPHDISLLQPTFCDNSPVPYHVPD.

This sequence belongs to the KRTAP type 3 family. In terms of assembly, interacts with wool keratins. As to expression, wool.

In terms of biological role, in the wool cortex, wool keratin intermediate filaments are embedded in an interfilamentous matrix, consisting of hair keratin-associated proteins (KRTAP), which are essential for the formation of a rigid and resistant wool shaft through their extensive disulfide bond cross-linking with abundant cysteine residues of wool keratins. The matrix proteins include the high-sulfur and high-glycine-tyrosine keratins. In Capra hircus (Goat), this protein is Keratin-associated protein 3-1 (KRTAP3-1).